We begin with the raw amino-acid sequence, 283 residues long: Elongation factor Ts (283 aa).

The segment at 80 to 83 (TDFV) is involved in Mg(2+) ion dislocation from EF-Tu.

This sequence belongs to the EF-Ts family.

It is found in the cytoplasm. Functionally, associates with the EF-Tu.GDP complex and induces the exchange of GDP to GTP. It remains bound to the aminoacyl-tRNA.EF-Tu.GTP complex up to the GTP hydrolysis stage on the ribosome. The sequence is that of Elongation factor Ts from Haemophilus influenzae (strain 86-028NP).